The primary structure comprises 61 residues: Probable spanin, outer lipoprotein subunit (61 aa).

Residues 1–28 (MLTRLSKLSALMFLLGVSACKSPPPVQS) form the signal peptide. Topologically, residues 29–61 (QRPEPAAWAMEKAQDLQQMLNSIITVSEVESTG) are periplasmic.

It belongs to the caudovirales o-spanin family. In terms of assembly, interacts (via C-terminus) with the spanin inner membrane subunit (via C-terminus). Part of the spanin complex which spans the entire periplasmic space. The spanin complex is composed of spanin inner membrane subunit and spanin outer membrane subunit.

Its subcellular location is the host cell outer membrane. In terms of biological role, component of the spanin complex that disrupts the host outer membrane and participates in cell lysis during virus exit. The spanin complex conducts the final step in host lysis by disrupting the outer membrane after holin and endolysin action have permeabilized the inner membrane and degraded the host peptidoglycans. Host outer membrane disruption is possibly due to local fusion between the inner and outer membrane performed by the spanin complex. The polypeptide is Probable spanin, outer lipoprotein subunit (Rz1) (Salmonella typhimurium (Bacteriophage P22)).